A 167-amino-acid polypeptide reads, in one-letter code: 3-isopropylmalate dehydratase small subunit (167 aa).

Belongs to the LeuD family. LeuD type 2 subfamily. In terms of assembly, heterodimer of LeuC and LeuD.

The catalysed reaction is (2R,3S)-3-isopropylmalate = (2S)-2-isopropylmalate. The protein operates within amino-acid biosynthesis; L-leucine biosynthesis; L-leucine from 3-methyl-2-oxobutanoate: step 2/4. Catalyzes the isomerization between 2-isopropylmalate and 3-isopropylmalate, via the formation of 2-isopropylmaleate. In Sulfurimonas denitrificans (strain ATCC 33889 / DSM 1251) (Thiomicrospira denitrificans (strain ATCC 33889 / DSM 1251)), this protein is 3-isopropylmalate dehydratase small subunit.